Consider the following 131-residue polypeptide: Fumarate reductase subunit C (131 aa).

3 helical membrane-spanning segments follow: residues 30–50 (EGTAVPAVWFSIELIFGLFAL), 57–77 (WMGFVGFLQNPVVVILNLIAL), and 109–129 (IIKGLWVVTAVVTVVILYVAL).

This sequence belongs to the FrdC family. As to quaternary structure, part of an enzyme complex containing four subunits: a flavoprotein (FrdA), an iron-sulfur protein (FrdB), and two hydrophobic anchor proteins (FrdC and FrdD).

The protein localises to the cell inner membrane. Its function is as follows. Two distinct, membrane-bound, FAD-containing enzymes are responsible for the catalysis of fumarate and succinate interconversion; fumarate reductase is used in anaerobic growth, and succinate dehydrogenase is used in aerobic growth. Anchors the catalytic components of the fumarate reductase complex to the cell inner membrane, binds quinones. The chain is Fumarate reductase subunit C from Citrobacter koseri (strain ATCC BAA-895 / CDC 4225-83 / SGSC4696).